Reading from the N-terminus, the 513-residue chain is Sterol 14-alpha demethylase (513 aa).

The chain crosses the membrane as a helical span at residues 8–28; that stretch reads AYALLAFVAIMALNVTYQFLF. N-linked (GlcNAc...) asparagine glycosylation is found at Asn32 and Asn332. A heme-binding site is contributed by Cys453.

Belongs to the cytochrome P450 family. It depends on heme as a cofactor.

It is found in the endoplasmic reticulum membrane. The catalysed reaction is a 14alpha-methyl steroid + 3 reduced [NADPH--hemoprotein reductase] + 3 O2 = a Delta(14) steroid + formate + 3 oxidized [NADPH--hemoprotein reductase] + 4 H2O + 4 H(+). It catalyses the reaction a 14alpha-methyl steroid + reduced [NADPH--hemoprotein reductase] + O2 = a 14alpha-hydroxymethyl steroid + oxidized [NADPH--hemoprotein reductase] + H2O + H(+). The enzyme catalyses a 14alpha-hydroxymethyl steroid + reduced [NADPH--hemoprotein reductase] + O2 = a 14alpha-formyl steroid + oxidized [NADPH--hemoprotein reductase] + 2 H2O + H(+). It carries out the reaction a 14alpha-formyl steroid + reduced [NADPH--hemoprotein reductase] + O2 = a Delta(14) steroid + formate + oxidized [NADPH--hemoprotein reductase] + H2O + 2 H(+). The catalysed reaction is lanosterol + 3 reduced [NADPH--hemoprotein reductase] + 3 O2 = 4,4-dimethyl-5alpha-cholesta-8,14,24-trien-3beta-ol + formate + 3 oxidized [NADPH--hemoprotein reductase] + 4 H2O + 4 H(+). It catalyses the reaction lanosterol + reduced [NADPH--hemoprotein reductase] + O2 = 32-hydroxylanosterol + oxidized [NADPH--hemoprotein reductase] + H2O + H(+). The enzyme catalyses 32-hydroxylanosterol + reduced [NADPH--hemoprotein reductase] + O2 = 32-oxolanosterol + oxidized [NADPH--hemoprotein reductase] + 2 H2O + H(+). It carries out the reaction 32-oxolanosterol + reduced [NADPH--hemoprotein reductase] + O2 = 4,4-dimethyl-5alpha-cholesta-8,14,24-trien-3beta-ol + formate + oxidized [NADPH--hemoprotein reductase] + H2O + 2 H(+). The catalysed reaction is eburicol + 3 reduced [NADPH--hemoprotein reductase] + 3 O2 = 14-demethyleburicol + formate + 3 oxidized [NADPH--hemoprotein reductase] + 4 H2O + 4 H(+). It catalyses the reaction eburicol + reduced [NADPH--hemoprotein reductase] + O2 = 32-hydroxyeburicol + oxidized [NADPH--hemoprotein reductase] + H2O + H(+). The enzyme catalyses 32-hydroxyeburicol + reduced [NADPH--hemoprotein reductase] + O2 = 32-oxoeburicol + oxidized [NADPH--hemoprotein reductase] + 2 H2O + H(+). It carries out the reaction 32-oxoeburicol + reduced [NADPH--hemoprotein reductase] + O2 = 14-demethyleburicol + formate + oxidized [NADPH--hemoprotein reductase] + H2O + 2 H(+). Its pathway is steroid biosynthesis; sterol biosynthesis. Sterol 14alpha-demethylase, encoded by cyp51A, cyp51B and cyp51C, that plays a critical role in the third module of ergosterol biosynthesis pathway, being ergosterol the major sterol component in fungal membranes that participates in a variety of functions. The third module or late pathway involves the ergosterol synthesis itself through consecutive reactions that mainly occur in the endoplasmic reticulum (ER) membrane. In filamentous fungi, during the initial step of this module, lanosterol (lanosta-8,24-dien-3beta-ol) can be metabolized to eburicol. Sterol 14alpha-demethylase catalyzes the three-step oxidative removal of the 14alpha-methyl group (C-32) of both these sterols in the form of formate, and converts eburicol and lanosterol to 14-demethyleburicol (4,4,24-trimethylergosta-8,14,24(28)-trienol) and 4,4-dimethyl-5alpha-cholesta-8,14,24-trien-3beta-ol, respectively, which are further metabolized by other enzymes in the pathway to ergosterol. Can also use substrates not intrinsic to fungi, such as 24,25-dihydrolanosterol (DHL), producing 4,4'-dimethyl-8,14-cholestadien-3-beta-ol, but at lower rates than the endogenous substrates. Functionally, as a target of azole drugs, plays a crucial role in azole drug susceptibility. This chain is Sterol 14-alpha demethylase, found in Aspergillus flavus (strain ATCC 200026 / FGSC A1120 / IAM 13836 / NRRL 3357 / JCM 12722 / SRRC 167).